A 132-amino-acid polypeptide reads, in one-letter code: Small ribosomal subunit protein uS8 (132 aa).

This sequence belongs to the universal ribosomal protein uS8 family. Part of the 30S ribosomal subunit. Contacts proteins S5 and S12.

One of the primary rRNA binding proteins, it binds directly to 16S rRNA central domain where it helps coordinate assembly of the platform of the 30S subunit. The chain is Small ribosomal subunit protein uS8 from Lactobacillus acidophilus (strain ATCC 700396 / NCK56 / N2 / NCFM).